A 388-amino-acid polypeptide reads, in one-letter code: Chorismate synthase (388 aa).

Residues Arg-39 and Arg-45 each contribute to the NADP(+) site. Residues 130–132 (RSS), 251–252 (NA), Gly-296, 311–315 (KPIPT), and Arg-337 contribute to the FMN site.

This sequence belongs to the chorismate synthase family. In terms of assembly, homotetramer. Requires FMNH2 as cofactor.

It carries out the reaction 5-O-(1-carboxyvinyl)-3-phosphoshikimate = chorismate + phosphate. The protein operates within metabolic intermediate biosynthesis; chorismate biosynthesis; chorismate from D-erythrose 4-phosphate and phosphoenolpyruvate: step 7/7. Catalyzes the anti-1,4-elimination of the C-3 phosphate and the C-6 proR hydrogen from 5-enolpyruvylshikimate-3-phosphate (EPSP) to yield chorismate, which is the branch point compound that serves as the starting substrate for the three terminal pathways of aromatic amino acid biosynthesis. This reaction introduces a second double bond into the aromatic ring system. This is Chorismate synthase from Streptococcus pyogenes serotype M6 (strain ATCC BAA-946 / MGAS10394).